Here is a 1052-residue protein sequence, read N- to C-terminus: Lateral signaling target protein 2 homolog (1052 aa).

5 disordered regions span residues 311–348, 379–455, 506–539, 551–678, and 814–973; these read YSSI…TSPH, PSML…DSDS, DEFG…STSA, LRLP…ASSF, and NTID…IPDG. Composition is skewed to low complexity over residues 312 to 346, 379 to 392, and 400 to 419; these read SSIE…STTS, PSML…TPTA, and PSHS…NPPA. A compositionally biased stretch (acidic residues) spans 422 to 455; the sequence is SEDDDDDDEEREDDEEECGMLDSDEQDLNDDSDS. The segment covering 554–574 has biased composition (polar residues); the sequence is PSSSSENEQTTGSNQQSTIKT. Ser555 and Ser556 each carry phosphoserine. Composition is skewed to basic residues over residues 588-614 and 625-644; these read RQRH…HHQQ and SHHH…ARKR. Positions 652 to 661 are enriched in polar residues; it reads STTAEQQQTI. Residues 824–842 are compositionally biased toward low complexity; that stretch reads NNNNNNNNNSGSSSSSNSS. The residue at position 854 (Ser854) is a Phosphoserine. Over residues 872-915 the composition is skewed to low complexity; it reads QQQQQQQAQLQLQMQRQRNNSVGSNSPSSSSSSSSSSEHNSPIS. The segment covering 926–935 has biased composition (polar residues); the sequence is SNSASMPSIG. Over residues 936–963 the composition is skewed to low complexity; sequence STATTAAATAAATATTTTSATTTTTTTT. The FYVE-type zinc finger occupies 972–1032; the sequence is DGKAPRCMSC…VCRECYVREV (61 aa). Residues Cys978, Cys981, Cys994, Cys997, Cys1002, Cys1005, Cys1024, and Cys1027 each contribute to the Zn(2+) site.

The protein belongs to the lst-2 family.

Functionally, negative regulator of epidermal growth factor receptor (EGFR) signaling. This is Lateral signaling target protein 2 homolog from Drosophila virilis (Fruit fly).